Consider the following 261-residue polypeptide: Aquaporin-8 (261 aa).

Over 1-36 (MSGEQTPMCSMDLPEVKVKTSMAGRCRVFWYEQYVQ) the chain is Cytoplasmic. The chain crosses the membrane as a helical span at residues 37–57 (PCIVELVGSALFIFIGCLSVI). C53 carries the post-translational modification Cysteine persulfide. C53 carries the post-translational modification Cysteine sulfenic acid (-SOH). Residues 58-84 (ENSPNTGLLQPALAHGLALGLIIATLG) are Extracellular-facing. A helical transmembrane segment spans residues 85–105 (NISGGHFNPAVSLAVTVIGGL). Residues 92–94 (NPA) carry the NPA 1 motif. The Cytoplasmic portion of the chain corresponds to 106–107 (KT). Residues 108–128 (MLLIPYWISQLFGGLIGAALA) form a helical membrane-spanning segment. The Extracellular segment spans residues 129–156 (KVVSPEERFWNASGAAFAIVQEQEQVAE). N-linked (GlcNAc...) asparagine glycosylation is present at N139. Residues 157 to 177 (ALGIEIILTMLLVLAVCMGAV) traverse the membrane as a helical segment. At 178–183 (NEKTMG) the chain is on the cytoplasmic side. A helical transmembrane segment spans residues 184-204 (PLAPFSIGFSVIVDILAGGSI). Residues 205 to 228 (SGACMNPARAFGPAVMAGYWDFHW) lie on the Extracellular side of the membrane. Positions 210 to 212 (NPA) match the NPA 2 motif. A helical transmembrane segment spans residues 229–249 (IYWLGPLLAGLFVGLLIRLLI). The Cytoplasmic segment spans residues 250–261 (GDEKTRLILKSR).

Belongs to the MIP/aquaporin (TC 1.A.8) family. In terms of processing, sulfenylation at Cys-53(C53-SOH) when hydrogen peroxide flows through the AQP8 channel, making it susceptible to hydrogen sulfide produced by CBS. Persulfidation at Cys-53 is required to gate AQP8 channel; under stress condition, hydrogen peroxide accumulates in the cell leading to CBS activation that produces hydrogen sulfide inducing persulfidation of oxidized Cys-53 (C53-SOH). Post-translationally, N-glycosylated. In terms of tissue distribution, expressed in placenta. Highly expressed in the epithelial layer of gall-bladders. Expressed in heart, kidney, submandibular gland, liver, small intestine, colon, testes, and epididymis. In testes, expressed in spermatogenic cells.

It localises to the cell membrane. The protein localises to the mitochondrion inner membrane. The protein resides in the apical cell membrane. It is found in the basolateral cell membrane. Its subcellular location is the smooth endoplasmic reticulum membrane. The catalysed reaction is H2O(in) = H2O(out). The enzyme catalyses urea(in) = urea(out). It catalyses the reaction NH4(+)(in) = NH4(+)(out). It carries out the reaction H2O2(out) = H2O2(in). The catalysed reaction is formamide(out) = formamide(in). The enzyme catalyses methylamine(out) = methylamine(in). Its activity is regulated as follows. Reversibly gated by a two-step sulfenylation-persulfidation process in cells undergoing diverse stresses. In terms of biological role, channel that allows the facilitated permeation of water and uncharged molecules, such as hydrogen peroxide and the neutral form of ammonia (NH3), through cellular membranes such as plasma membrane, inner mitochondrial membrane and endoplasmic reticulum membrane of several tissues. The transport of ammonia neutral form induces a parallel transport of proton, at alkaline pH when the concentration of ammonia is high. However, it is unclear whether the transport of proton takes place via the aquaporin or via an endogenous pathway. Also, may transport ammonia analogs such as formamide and methylamine, a transport favourited at basic pH due to the increase of unprotonated (neutral) form, which is expected to favor diffusion. In vitro, may be also permeable to urea but not to glycerol. Does not transport urea or glycerol. The water transport mechanism is mercury- and copper-sensitive and passive in response to osmotic driving forces. At the canicular plasma membrane, mediates the osmotic transport of water toward the bile canaliculus and facilitates the cAMP-induced bile canalicular water secretion, a process involved in bile formation. In addition, mediates the hydrogen peroxide release from hepatocyte mitochondria that modulates the SREBF2-mediated cholesterol synthesis and facilitates the mitochondrial ammonia uptake which is metabolized into urea, mainly under glucagon stimulation. In B cells, transports the CYBB-generated hydrogen peroxide from the external leaflet of the plasma membrane to the cytosol to promote B cell activation and differentiation for signal amplification. In the small intestine and colon system, mediates water transport through mitochondria and apical membrane of epithelial cells. May play an important role in the adaptive response of proximal tubule cells to acidosis possibly facilitating mitochondrial ammonia transport. This chain is Aquaporin-8, found in Mus musculus (Mouse).